Here is a 345-residue protein sequence, read N- to C-terminus: NADPH dehydrogenase (345 aa).

Residue 23–26 (SPMC) participates in FMN binding. Residue tyrosine 28 coordinates substrate. FMN is bound by residues alanine 60 and glutamine 102. 164–167 (HGAH) is a binding site for substrate. FMN-binding positions include arginine 215 and 307-308 (GR).

It belongs to the NADH:flavin oxidoreductase/NADH oxidase family. NamA subfamily. In terms of assembly, homotetramer. The cofactor is FMN.

It catalyses the reaction A + NADPH + H(+) = AH2 + NADP(+). Catalyzes the reduction of the double bond of an array of alpha,beta-unsaturated aldehydes and ketones. It also reduces the nitro group of nitroester and nitroaromatic compounds. It could have a role in detoxification processes. This Bacillus thuringiensis subsp. konkukian (strain 97-27) protein is NADPH dehydrogenase.